Here is a 507-residue protein sequence, read N- to C-terminus: MVINIQPDEIGSIIRKQIKGYVPEMKVVNIGTVLQVGDGIARIHGLDEVMAGELVEFEDGTVGIALNLESDNVGAVLMGDGLTIREGGSVRATGKIAQIPVSDSFLGRVVNALAQPIDGKGQIPASEFRLIESSAPGIISRRSVYEPLQTGLIAIDSMIPIGRGQRELIIGDRQTGKTAVATDTILNQKGQNVICVYVAIGQKASSVAQVVDTFRERGALEYTIVVSETANSPATLQYLAPYTGAALAEYFMYRKQHTLIIYDDLSKQAQAYRQMSLLLKRPPGREAYPGDVFYLHSRLLERAAKLSTQLGEGSMTALPIVETQAGDVSAYIPTNVISITDGQIFLSADLFNAGIRPAINVGISVSRVGSAAQIKAMKQVAGKLKLELAQFAELEAFAQFASDLDKTTQNQLARGQRLRELLKQSQSAPLAVEEQVATIYTGVNGYLDVLDVEQVKRFLVQLREYVATSKPSFGEIIRSTKVFTEQAEALLKEAIKESTELFLLQER.

170–177 serves as a coordination point for ATP; the sequence is IGDRQTGK.

Belongs to the ATPase alpha/beta chains family. F-type ATPases have 2 components, CF(1) - the catalytic core - and CF(0) - the membrane proton channel. CF(1) has five subunits: alpha(3), beta(3), gamma(1), delta(1), epsilon(1). CF(0) has four main subunits: a, b, b' and c.

It is found in the plastid. Its subcellular location is the chloroplast thylakoid membrane. It catalyses the reaction ATP + H2O + 4 H(+)(in) = ADP + phosphate + 5 H(+)(out). Functionally, produces ATP from ADP in the presence of a proton gradient across the membrane. The alpha chain is a regulatory subunit. The sequence is that of ATP synthase subunit alpha, chloroplastic from Adiantum capillus-veneris (Maidenhair fern).